Consider the following 801-residue polypeptide: Mitochondrial intermediate peptidase (801 aa).

A mitochondrion-targeting transit peptide spans 1–41 (MKPQLLTPLRRRPWTCRQCLQRLQRLQQQTRRSFETAASPA). The tract at residues 31-54 (RRSFETAASPAPGHTQVDYIPADA) is disordered. Position 565 (His565) interacts with Zn(2+). Residue Glu566 is part of the active site. Zn(2+)-binding residues include His569 and His572.

The protein belongs to the peptidase M3 family. Zn(2+) serves as cofactor.

It is found in the mitochondrion matrix. The enzyme catalyses Release of an N-terminal octapeptide as second stage of processing of some proteins imported into the mitochondrion.. Its function is as follows. Cleaves proteins, imported into the mitochondrion, to their mature size. While most mitochondrial precursor proteins are processed to the mature form in one step by mitochondrial processing peptidase (MPP), the sequential cleavage by MIP of an octapeptide after initial processing by MPP is a required step for a subgroup of nuclear-encoded precursor proteins destined for the matrix or the inner membrane. This is Mitochondrial intermediate peptidase (oct1) from Aspergillus clavatus (strain ATCC 1007 / CBS 513.65 / DSM 816 / NCTC 3887 / NRRL 1 / QM 1276 / 107).